We begin with the raw amino-acid sequence, 514 residues long: ATP synthase subunit alpha 2 (514 aa).

An ATP-binding site is contributed by 170-177 (GDRQTGKT).

The protein belongs to the ATPase alpha/beta chains family. F-type ATPases have 2 components, CF(1) - the catalytic core - and CF(0) - the membrane proton channel. CF(1) has five subunits: alpha(3), beta(3), gamma(1), delta(1), epsilon(1). CF(0) has three main subunits: a(1), b(2) and c(9-12). The alpha and beta chains form an alternating ring which encloses part of the gamma chain. CF(1) is attached to CF(0) by a central stalk formed by the gamma and epsilon chains, while a peripheral stalk is formed by the delta and b chains.

Its subcellular location is the cell inner membrane. The enzyme catalyses ATP + H2O + 4 H(+)(in) = ADP + phosphate + 5 H(+)(out). Its function is as follows. Produces ATP from ADP in the presence of a proton gradient across the membrane. The alpha chain is a regulatory subunit. In Hahella chejuensis (strain KCTC 2396), this protein is ATP synthase subunit alpha 2.